The primary structure comprises 257 residues: Histidine/lysine/arginine/ornithine transport ATP-binding protein HisP (257 aa).

Residues 6 to 252 (LNVIDLHKRY…PQSPRLQRFL (247 aa)) enclose the ABC transporter domain. Residues Ser-40, Gly-41, Gly-43, Lys-44, Ser-45, and Thr-46 each coordinate ATP.

The protein belongs to the ABC transporter superfamily. As to quaternary structure, the HisPMQJ complex is composed of two ATP-binding proteins (HisP), two transmembrane proteins (HisM and HisQ) and a solute-binding protein (HisJ). The HisPMQ-ArgT complex is composed of two ATP-binding proteins (HisP), two transmembrane proteins (HisM and HisQ) and a solute-binding protein (ArgT).

The protein localises to the cell inner membrane. The catalysed reaction is a polar amino acid(out) + ATP + H2O = a polar amino acid(in) + ADP + phosphate + H(+). It catalyses the reaction L-histidine(out) + ATP + H2O = L-histidine(in) + ADP + phosphate + H(+). It carries out the reaction L-lysine(out) + ATP + H2O = L-lysine(in) + ADP + phosphate + H(+). The enzyme catalyses L-arginine(out) + ATP + H2O = L-arginine(in) + ADP + phosphate + H(+). The catalysed reaction is L-ornithine(out) + ATP + H2O = L-ornithine(in) + ADP + phosphate + H(+). In terms of biological role, part of the ABC transporter complex HisPMQJ involved in histidine transport. Is also part of the ABC transporter complex HisPMQ-ArgT involved in lysine/arginine/ornithine transport. Shows ATPase activity. Responsible for energy coupling to the transport system. The sequence is that of Histidine/lysine/arginine/ornithine transport ATP-binding protein HisP from Escherichia coli (strain K12).